The following is a 372-amino-acid chain: N-methyl-L-tryptophan oxidase (372 aa).

4–34 is a binding site for FAD; the sequence is DLIIIGSGSVGAAAGYYATRAGLNVLMTDAH. Position 308 is an S-8alpha-FAD cysteine (C308).

Belongs to the MSOX/MTOX family. MTOX subfamily. In terms of assembly, monomer. The cofactor is FAD.

The enzyme catalyses N(alpha)-methyl-L-tryptophan + O2 + H2O = L-tryptophan + formaldehyde + H2O2. Catalyzes the oxidative demethylation of N-methyl-L-tryptophan. The protein is N-methyl-L-tryptophan oxidase of Shigella flexneri serotype 5b (strain 8401).